We begin with the raw amino-acid sequence, 319 residues long: Ribonucleoside-diphosphate reductase small chain (319 aa).

The Fe cation site is built by Asp-70, Glu-101, and His-104. Residue Tyr-108 is part of the active site. Residues Glu-163, Glu-197, and His-200 each contribute to the Fe cation site. Residues 313–319 (FSLDVDF) form an interaction with R1 region.

It belongs to the ribonucleoside diphosphate reductase small chain family. In terms of assembly, interacts with RNR1/OPG080 subunit. Can interact with host RNR1 supunit. Fe cation is required as a cofactor.

It catalyses the reaction a 2'-deoxyribonucleoside 5'-diphosphate + [thioredoxin]-disulfide + H2O = a ribonucleoside 5'-diphosphate + [thioredoxin]-dithiol. Ribonucleoside-diphosphate reductase holoenzyme provides the precursors necessary for viral DNA synthesis. Allows virus growth in non-dividing cells. Catalyzes the biosynthesis of deoxyribonucleotides from the corresponding ribonucleotides. The polypeptide is Ribonucleoside-diphosphate reductase small chain (OPG048) (Vaccinia virus (strain Copenhagen) (VACV)).